Reading from the N-terminus, the 657-residue chain is Glycogen debranching enzyme (657 aa).

D336 acts as the Nucleophile in catalysis. E371 acts as the Proton donor in catalysis. Residues 460 to 479 (ANGEENRDGTNNNYSNNHGK) are disordered.

The protein belongs to the glycosyl hydrolase 13 family.

The catalysed reaction is Hydrolysis of (1-&gt;6)-alpha-D-glucosidic linkages to branches with degrees of polymerization of three or four glucose residues in limit dextrin.. Its pathway is glycan degradation; glycogen degradation. In terms of biological role, removes maltotriose and maltotetraose chains that are attached by 1,6-alpha-linkage to the limit dextrin main chain, generating a debranched limit dextrin. In Escherichia coli O9:H4 (strain HS), this protein is Glycogen debranching enzyme.